A 284-amino-acid polypeptide reads, in one-letter code: MKVFILALLALTATTAIAQLETTCSQGFRQYQQQQQPGQRQLLEQMRPCVAFLQQQCRPLRMPFLQTQVEQLSSCQIVQYQCCQQLAQIPEQIRCHAIHNVVEAIMQQQSQQQRQERQQQAQHKSMRMLLENLSLMCNIYVPIQCQQQQQLGQQQQQQLQEQLTPCATFLQHQCSPVTVPFPQIPVDQPTSCQNVQHQCCRQLSQIPEQFRCQAIHNVAEAIRQQQPQQQWQGMYQPQQPAQLESIRMSLQALRSMCSIYIPVQCPAPTAYNIPMVATYTGGAC.

The N-terminal stretch at 1 to 18 (MKVFILALLALTATTAIA) is a signal peptide.

This sequence belongs to the prolamin family. Contains disulfide bonds.

Functionally, seed storage protein. Might be integrated via inter-chain disulfide bonds within the glutenin polymer. This Triticum aestivum (Wheat) protein is Avenin-like b4.